A 698-amino-acid polypeptide reads, in one-letter code: Protein let-99 (698 aa).

The region spanning 23 to 107 is the DEP domain; it reads FRSNLSLKTN…SESRIYLFMK (85 aa). Disordered regions lie at residues 115-188 and 653-672; these read PKPR…DDEI and ITRS…QASP. Positions 146–157 are enriched in basic residues; it reads RPPKARLPRRLS. Basic and acidic residues predominate over residues 178–188; it reads HGFDDHKDDEI.

The protein resides in the cytoplasm. It is found in the cell cortex. Required for the proper orientation of spindles after the establishment of polarity. May play a role in interactions between the astral microtubules and the cortical cytoskeleton. Required for asymmetric forces on nuclei and spindles. Acts downstream of the PAR signaling as an intermediate that transduces polarity information to the machinery that positions the mitotic spindle, possibly by regulating force generation. Regulates gpr-1/2 asymmetric cortical localization during the first embryonic cell divisions. Acts antagonistically to the gpr-1/2 signaling pathway. Regulates mes-1 expression and/or localization pattern during early embryogenesis. This is Protein let-99 (let-99) from Caenorhabditis elegans.